The following is a 779-amino-acid chain: MDSSIHLSGLLSRHDDDATRTSTSEGLEEGEVEGETLLIVESEDQASVDLSHDQSGDSLNSDEGDVSWMEEQLSYFCDKCQKWIPASQLREQLSYLKGDNFFRFTCCDCSADGKEQYERLKLTWQQVVMLAMYNLSLEGSGRQGYFRWKEDICAFIEKHWTFLLGNRKKTSTWWSTVAGCLSVGSPVYFRSGAQEFGEPGWWKLVHNRPPTMRPEGEKLAASTLKVKASKPTLDPIITVEGLRKRASRNPVESAMELKEKRSRTQEAKDIRRAQKEAAGLLDRSTSSTPVKFISRGRRPDLILEKGEVIDFSSLSSSDRTPLTSPSPSPSLDFSAPGTPASHSATPSLLSEADLIPDVMPPQALFHDDDELEGDGVIDPGMEYIPPPAGSASGLLGSRKKVRAPEQIKQEVDSEEEKPDRMDGDSEDTDSNISLHTRAREKRKPPLEKDMKPKGPRYTPVSIYEEKLLLKRLEACPGAVAMTPEARRLKRKLIVRQAKRDRGLPLFDLDEVVNAALLLVDGIYGAKDGGASRLAAGQATYRTTCQDFRILDRYQTALPARKGFRHQTTRFLYRLVGSEDLAVDQSIISPYTSRILKPYIRRDYETKPPKLQLLSQIRSHLHRSDPHWTPGPDAPLDYCYVRPNHIPTINSMCQEFFWPGIDLSECLQYPDFSVVVLYKKVIVAFGFMVPDVKYNEAYISFLLVHPEWRRAGIATFMIYHLIQTCMGKDVTLHVSASNPAMLLYQKFGFKTEEYVLDFYDKYYPLESTECKHAFFLRLRR.

The segment at 1 to 34 (MDSSIHLSGLLSRHDDDATRTSTSEGLEEGEVEG) is disordered. Position 4 is a phosphoserine (serine 4). Lysine 230 is subject to N6-acetyllysine. Disordered regions lie at residues 247-292 (SRNP…PVKF), 314-345 (LSSS…HSAT), and 360-457 (PPQA…GPRY). The span at 255–275 (MELKEKRSRTQEAKDIRRAQK) shows a compositional bias: basic and acidic residues. Phosphoserine is present on serine 284. Lysine 291 is subject to N6-acetyllysine. Residues 314 to 334 (LSSSDRTPLTSPSPSPSLDFS) are compositionally biased toward low complexity. 2 stretches are compositionally biased toward basic and acidic residues: residues 402-423 (RAPE…RMDG) and 443-452 (KPPLEKDMKP). Serine 413 bears the Phosphoserine mark. Residues 635–779 (LDYCYVRPNH…KHAFFLRLRR (145 aa)) enclose the N-acetyltransferase domain.

As to quaternary structure, interacts with the LIM 1 domain of CSRP2. Component of the ADA2A-containing complex (ATAC), composed of CSRP2BP, KAT2A, TADA2L, TADA3L, ZZ3, MBIP, WDR5, YEATS2, CCDC101 and DR1. In the complex, it probably interacts directly with KAT2A, MBIP and WDR5.

The protein resides in the nucleus. It is found in the cytoplasm. Component of the ATAC complex, a complex with histone acetyltransferase activity on histones H3 and H4. May function as a scaffold for the ATAC complex to promote ATAC complex stability. Has also weak histone acetyltransferase activity toward histone H4. Required for the normal progression through G1 and G2/M phases of the cell cycle. The protein is Cysteine-rich protein 2-binding protein of Mus musculus (Mouse).